A 54-amino-acid polypeptide reads, in one-letter code: Large ribosomal subunit protein bL33 (54 aa).

This sequence belongs to the bacterial ribosomal protein bL33 family.

The protein is Large ribosomal subunit protein bL33 of Elusimicrobium minutum (strain Pei191).